A 463-amino-acid polypeptide reads, in one-letter code: UDP-N-acetylmuramate--L-alanine ligase (463 aa).

112–118 (GTHGKTT) is an ATP binding site.

It belongs to the MurCDEF family.

Its subcellular location is the cytoplasm. The catalysed reaction is UDP-N-acetyl-alpha-D-muramate + L-alanine + ATP = UDP-N-acetyl-alpha-D-muramoyl-L-alanine + ADP + phosphate + H(+). It functions in the pathway cell wall biogenesis; peptidoglycan biosynthesis. Functionally, cell wall formation. In Thiobacillus denitrificans (strain ATCC 25259 / T1), this protein is UDP-N-acetylmuramate--L-alanine ligase.